We begin with the raw amino-acid sequence, 611 residues long: Broad-specificity linear acyl-CoA dehydrogenase FadE5 (611 aa).

Residues 162-165, serine 171, and threonine 198 contribute to the FAD site; that span reads MVLT. Serine 171 lines the a 2,3-saturated acyl-CoA pocket. Residues 224-225 and arginine 301 contribute to the a 2,3-saturated acyl-CoA site; that span reads TK. Arginine 326 is a binding site for FAD. Lysine 338 contributes to the a 2,3-saturated acyl-CoA binding site. 420 to 424 is a binding site for FAD; the sequence is QTLGG. A 2,3-saturated acyl-CoA is bound at residue glutamate 447. The active-site Proton acceptor is glutamate 447. Threonine 449 is a binding site for FAD. A 2,3-saturated acyl-CoA-binding positions include aspartate 456 and 460–461; that span reads RK.

Belongs to the acyl-CoA dehydrogenase family. In terms of assembly, homodimer. The cofactor is FAD.

It catalyses the reaction a long-chain 2,3-saturated fatty acyl-CoA + oxidized [electron-transfer flavoprotein] + H(+) = a long-chain (2E)-enoyl-CoA + reduced [electron-transfer flavoprotein]. The enzyme catalyses a medium-chain 2,3-saturated fatty acyl-CoA + oxidized [electron-transfer flavoprotein] + H(+) = a medium-chain (2E)-enoyl-CoA + reduced [electron-transfer flavoprotein]. It carries out the reaction a short-chain 2,3-saturated fatty acyl-CoA + oxidized [electron-transfer flavoprotein] + H(+) = a short-chain (2E)-enoyl-CoA + reduced [electron-transfer flavoprotein]. The catalysed reaction is octadecanoyl-CoA + oxidized [electron-transfer flavoprotein] + H(+) = (2E)-octadecenoyl-CoA + reduced [electron-transfer flavoprotein]. It catalyses the reaction oxidized [electron-transfer flavoprotein] + hexadecanoyl-CoA + H(+) = (2E)-hexadecenoyl-CoA + reduced [electron-transfer flavoprotein]. The enzyme catalyses dodecanoyl-CoA + oxidized [electron-transfer flavoprotein] + H(+) = (2E)-dodecenoyl-CoA + reduced [electron-transfer flavoprotein]. It carries out the reaction decanoyl-CoA + oxidized [electron-transfer flavoprotein] + H(+) = (2E)-decenoyl-CoA + reduced [electron-transfer flavoprotein]. The catalysed reaction is hexanoyl-CoA + oxidized [electron-transfer flavoprotein] + H(+) = (2E)-hexenoyl-CoA + reduced [electron-transfer flavoprotein]. It catalyses the reaction butanoyl-CoA + oxidized [electron-transfer flavoprotein] + H(+) = (2E)-butenoyl-CoA + reduced [electron-transfer flavoprotein]. It participates in lipid metabolism; fatty acid metabolism. Functionally, acyl-CoA dehydrogenase that exhibits broad specificity for linear acyl-CoA substrates, with a preference for long-chain substrates. This is Broad-specificity linear acyl-CoA dehydrogenase FadE5 from Mycobacterium tuberculosis (strain ATCC 25618 / H37Rv).